A 574-amino-acid polypeptide reads, in one-letter code: Polyamine aminopropyltransferase (574 aa).

A run of 7 helical transmembrane segments spans residues 22-42, 55-75, 90-110, 144-164, 188-208, 209-229, and 237-257; these read VLLL…EYLL, AAIY…AFAA, LTVA…IGFG, LPYF…PLIA, IGAG…DIQL, AAAL…WRFW, and LLLA…IQGP. Residues 254-510 are spermidine synthase; the sequence is IQGPSWEQQF…ATLDGKDAQH (257 aa). The 249-residue stretch at 257–505 folds into the PABS domain; that stretch reads PSWEQQFNNL…WGWSIATLDG (249 aa). S-methyl-5'-thioadenosine is bound at residue Q281. Spermidine contacts are provided by H317 and D341. S-methyl-5'-thioadenosine-binding positions include D360 and 403–404; that span reads DA. D424 serves as the catalytic Proton acceptor.

The protein belongs to the spermidine/spermine synthase family. In terms of assembly, homodimer or homotetramer.

The protein resides in the cell membrane. It catalyses the reaction S-adenosyl 3-(methylsulfanyl)propylamine + putrescine = S-methyl-5'-thioadenosine + spermidine + H(+). Its pathway is amine and polyamine biosynthesis; spermidine biosynthesis; spermidine from putrescine: step 1/1. Its function is as follows. Catalyzes the irreversible transfer of a propylamine group from the amino donor S-adenosylmethioninamine (decarboxy-AdoMet) to putrescine (1,4-diaminobutane) to yield spermidine. This chain is Polyamine aminopropyltransferase, found in Shewanella oneidensis (strain ATCC 700550 / JCM 31522 / CIP 106686 / LMG 19005 / NCIMB 14063 / MR-1).